The primary structure comprises 311 residues: 4-hydroxy-tetrahydrodipicolinate synthase (311 aa).

T49 contributes to the pyruvate binding site. Y138 (proton donor/acceptor) is an active-site residue. K166 (schiff-base intermediate with substrate) is an active-site residue. Residue V207 coordinates pyruvate.

The protein belongs to the DapA family. As to quaternary structure, homotetramer; dimer of dimers.

It is found in the cytoplasm. It carries out the reaction L-aspartate 4-semialdehyde + pyruvate = (2S,4S)-4-hydroxy-2,3,4,5-tetrahydrodipicolinate + H2O + H(+). Its pathway is amino-acid biosynthesis; L-lysine biosynthesis via DAP pathway; (S)-tetrahydrodipicolinate from L-aspartate: step 3/4. In terms of biological role, catalyzes the condensation of (S)-aspartate-beta-semialdehyde [(S)-ASA] and pyruvate to 4-hydroxy-tetrahydrodipicolinate (HTPA). The protein is 4-hydroxy-tetrahydrodipicolinate synthase of Lactobacillus helveticus (strain DPC 4571).